A 475-amino-acid polypeptide reads, in one-letter code: Ribulose bisphosphate carboxylase large chain (475 aa).

A propeptide spanning residues 1–2 is cleaved from the precursor; it reads MS. Pro3 bears the N-acetylproline mark. Lys14 carries the N6,N6,N6-trimethyllysine modification. Substrate is bound by residues Asn123 and Thr173. Catalysis depends on Lys175, which acts as the Proton acceptor. A substrate-binding site is contributed by Lys177. 3 residues coordinate Mg(2+): Lys201, Asp203, and Glu204. Lys201 carries the N6-carboxylysine modification. His294 functions as the Proton acceptor in the catalytic mechanism. Residues Arg295, His327, and Ser379 each contribute to the substrate site.

Belongs to the RuBisCO large chain family. Type I subfamily. As to quaternary structure, heterohexadecamer of 8 large chains and 8 small chains; disulfide-linked. The disulfide link is formed within the large subunit homodimers. The cofactor is Mg(2+). In terms of processing, the disulfide bond which can form in the large chain dimeric partners within the hexadecamer appears to be associated with oxidative stress and protein turnover.

It localises to the plastid. It is found in the chloroplast. It catalyses the reaction 2 (2R)-3-phosphoglycerate + 2 H(+) = D-ribulose 1,5-bisphosphate + CO2 + H2O. It carries out the reaction D-ribulose 1,5-bisphosphate + O2 = 2-phosphoglycolate + (2R)-3-phosphoglycerate + 2 H(+). RuBisCO catalyzes two reactions: the carboxylation of D-ribulose 1,5-bisphosphate, the primary event in carbon dioxide fixation, as well as the oxidative fragmentation of the pentose substrate in the photorespiration process. Both reactions occur simultaneously and in competition at the same active site. This Amaranthus tricolor (Joseph's coat) protein is Ribulose bisphosphate carboxylase large chain.